We begin with the raw amino-acid sequence, 156 residues long: ATP synthase subunit b 1 (156 aa).

Residues 5 to 27 (FTLISQAMAFAIFIWFTVRFVWP) traverse the membrane as a helical segment.

This sequence belongs to the ATPase B chain family. As to quaternary structure, F-type ATPases have 2 components, F(1) - the catalytic core - and F(0) - the membrane proton channel. F(1) has five subunits: alpha(3), beta(3), gamma(1), delta(1), epsilon(1). F(0) has three main subunits: a(1), b(2) and c(10-14). The alpha and beta chains form an alternating ring which encloses part of the gamma chain. F(1) is attached to F(0) by a central stalk formed by the gamma and epsilon chains, while a peripheral stalk is formed by the delta and b chains.

It is found in the cell inner membrane. Functionally, f(1)F(0) ATP synthase produces ATP from ADP in the presence of a proton or sodium gradient. F-type ATPases consist of two structural domains, F(1) containing the extramembraneous catalytic core and F(0) containing the membrane proton channel, linked together by a central stalk and a peripheral stalk. During catalysis, ATP synthesis in the catalytic domain of F(1) is coupled via a rotary mechanism of the central stalk subunits to proton translocation. Component of the F(0) channel, it forms part of the peripheral stalk, linking F(1) to F(0). The protein is ATP synthase subunit b 1 of Nitrosospira multiformis (strain ATCC 25196 / NCIMB 11849 / C 71).